The chain runs to 327 residues: Probable cell division protein WhiA (327 aa).

The segment at residues Ser-275–Lys-308 is a DNA-binding region (H-T-H motif). Residues Asp-304 to Ala-327 are disordered.

Belongs to the WhiA family.

In terms of biological role, involved in cell division and chromosome segregation. The polypeptide is Probable cell division protein WhiA (Mycolicibacterium gilvum (strain PYR-GCK) (Mycobacterium gilvum (strain PYR-GCK))).